We begin with the raw amino-acid sequence, 294 residues long: 4-diphosphocytidyl-2-C-methyl-D-erythritol kinase (294 aa).

Residue Lys-19 is part of the active site. Residue 106 to 116 participates in ATP binding; the sequence is PVASGIGGGSA. Residue Asp-148 is part of the active site.

The protein belongs to the GHMP kinase family. IspE subfamily.

It carries out the reaction 4-CDP-2-C-methyl-D-erythritol + ATP = 4-CDP-2-C-methyl-D-erythritol 2-phosphate + ADP + H(+). It functions in the pathway isoprenoid biosynthesis; isopentenyl diphosphate biosynthesis via DXP pathway; isopentenyl diphosphate from 1-deoxy-D-xylulose 5-phosphate: step 3/6. Catalyzes the phosphorylation of the position 2 hydroxy group of 4-diphosphocytidyl-2C-methyl-D-erythritol. The protein is 4-diphosphocytidyl-2-C-methyl-D-erythritol kinase of Rhizobium etli (strain ATCC 51251 / DSM 11541 / JCM 21823 / NBRC 15573 / CFN 42).